The chain runs to 274 residues: Nitrogenase iron protein (274 aa).

8–15 (GKGGIGKS) is an ATP binding site. A [4Fe-4S] cluster-binding site is contributed by cysteine 94. Arginine 97 carries the post-translational modification ADP-ribosylarginine; by dinitrogenase reductase ADP-ribosyltransferase. [4Fe-4S] cluster is bound at residue cysteine 131.

Belongs to the NifH/BchL/ChlL family. Homodimer. It depends on [4Fe-4S] cluster as a cofactor. In terms of processing, the reversible ADP-ribosylation of Arg-97 inactivates the nitrogenase reductase and regulates nitrogenase activity.

It carries out the reaction N2 + 8 reduced [2Fe-2S]-[ferredoxin] + 16 ATP + 16 H2O = H2 + 8 oxidized [2Fe-2S]-[ferredoxin] + 2 NH4(+) + 16 ADP + 16 phosphate + 6 H(+). The key enzymatic reactions in nitrogen fixation are catalyzed by the nitrogenase complex, which has 2 components: the iron protein and the molybdenum-iron protein. The protein is Nitrogenase iron protein of Chlorobium chlorochromatii (strain CaD3).